The chain runs to 385 residues: UPF0764 protein C16orf89 homolog (385 aa).

The signal sequence occupies residues 1–20; sequence MARLGLLLLLLLALPPHFSS. A disordered region spans residues 344–385; it reads AHPEYYPNHGDPYSSSQSPASNYQDGAAGPDVQRTGRPLSVS. Polar residues predominate over residues 356-367; the sequence is YSSSQSPASNYQ.

It belongs to the UPF0764 family. As to quaternary structure, homodimer. Glycosylated. As to expression, predominantly expressed in thyroid tissue.

It is found in the secreted. This Mus musculus (Mouse) protein is UPF0764 protein C16orf89 homolog.